Consider the following 422-residue polypeptide: Zinc finger and BTB domain-containing protein 42 (422 aa).

Residues 24–92 (CDCTVLVGDA…MYEGRLDLRS (69 aa)) form the BTB domain. Disordered stretches follow at residues 121–141 (KDRS…QPPC), 166–188 (AALP…DQAL), and 207–256 (LQTP…AAKG). A compositionally biased stretch (pro residues) spans 243–252 (HSPPKPPPVP). 4 consecutive C2H2-type zinc fingers follow at residues 294 to 316 (CICP…LSAH), 334 to 356 (PTCP…ERTH), 362 to 384 (YTCV…TVVH), and 390 to 413 (HACR…RKFH).

The protein belongs to the krueppel C2H2-type zinc-finger protein family. ZBTB18 subfamily. In terms of tissue distribution, expressed in skeletal muscle (at protein level).

The protein localises to the cytoplasm. It is found in the nucleus. Its subcellular location is the nucleoplasm. Its function is as follows. Transcriptional repressor. Specifically binds DNA and probably acts by recruiting chromatin remodeling multiprotein complexes. The protein is Zinc finger and BTB domain-containing protein 42 (ZBTB42) of Homo sapiens (Human).